The following is a 78-amino-acid chain: NAD(P)H-quinone oxidoreductase subunit L (78 aa).

2 helical membrane-spanning segments follow: residues 10-30 and 48-68; these read LFVIGTYLFLGTLYLVFIPLG and LLIYSLVFLFFPGLILFAPFL.

Belongs to the complex I NdhL subunit family. NDH-1 can be composed of about 15 different subunits; different subcomplexes with different compositions have been identified which probably have different functions.

The protein localises to the cellular thylakoid membrane. It catalyses the reaction a plastoquinone + NADH + (n+1) H(+)(in) = a plastoquinol + NAD(+) + n H(+)(out). It carries out the reaction a plastoquinone + NADPH + (n+1) H(+)(in) = a plastoquinol + NADP(+) + n H(+)(out). Its function is as follows. NDH-1 shuttles electrons from an unknown electron donor, via FMN and iron-sulfur (Fe-S) centers, to quinones in the respiratory and/or the photosynthetic chain. The immediate electron acceptor for the enzyme in this species is believed to be plastoquinone. Couples the redox reaction to proton translocation, and thus conserves the redox energy in a proton gradient. Cyanobacterial NDH-1 also plays a role in inorganic carbon-concentration. The protein is NAD(P)H-quinone oxidoreductase subunit L of Prochlorococcus marinus (strain SARG / CCMP1375 / SS120).